Reading from the N-terminus, the 366-residue chain is Spermidine/putrescine import ATP-binding protein PotA (366 aa).

The ABC transporter domain maps to 8–239 (IRFENVTKQF…PINKFVADFI (232 aa)). An ATP-binding site is contributed by 41 to 48 (GPSGCGKT).

This sequence belongs to the ABC transporter superfamily. Spermidine/putrescine importer (TC 3.A.1.11.1) family. The complex is composed of two ATP-binding proteins (PotA), two transmembrane proteins (PotB and PotC) and a solute-binding protein (PotD).

Its subcellular location is the cell membrane. The enzyme catalyses ATP + H2O + polyamine-[polyamine-binding protein]Side 1 = ADP + phosphate + polyamineSide 2 + [polyamine-binding protein]Side 1.. Its function is as follows. Part of the ABC transporter complex PotABCD involved in spermidine/putrescine import. Responsible for energy coupling to the transport system. The chain is Spermidine/putrescine import ATP-binding protein PotA from Listeria monocytogenes serovar 1/2a (strain ATCC BAA-679 / EGD-e).